The following is a 257-amino-acid chain: Phosphonates import ATP-binding protein PhnC (257 aa).

The ABC transporter domain occupies 7-251 (IQLKDVSKIY…VFTDIYNGGD (245 aa)). 40–47 (GLSGAGKS) is an ATP binding site.

It belongs to the ABC transporter superfamily. Phosphonates importer (TC 3.A.1.9.1) family. As to quaternary structure, the complex is composed of two ATP-binding proteins (PhnC), two transmembrane proteins (PhnE) and a solute-binding protein (PhnD).

The protein resides in the cell membrane. It carries out the reaction phosphonate(out) + ATP + H2O = phosphonate(in) + ADP + phosphate + H(+). Part of the ABC transporter complex PhnCDE involved in phosphonates import. Responsible for energy coupling to the transport system. This chain is Phosphonates import ATP-binding protein PhnC, found in Lactobacillus acidophilus (strain ATCC 700396 / NCK56 / N2 / NCFM).